The chain runs to 71 residues: Dermaseptin-PT9 (71 aa).

Positions 1–22 (MAFLKKSLFLVLFLGLVSLSIC) are cleaved as a signal peptide. Positions 23–43 (EEEKRENEMEQEDDEQSEMKR) are excised as a propeptide. Val68 bears the Valine amide mark. A propeptide spanning residues 69 to 71 (GEQ) is cleaved from the precursor.

This sequence belongs to the frog skin active peptide (FSAP) family. Dermaseptin subfamily. In terms of tissue distribution, expressed by the skin glands.

The protein resides in the secreted. It localises to the target cell membrane. Functionally, antimicrobial peptide with activity against fungi, Gram-positive and Gram-negative bacteria. Is active against S.aureus (MIC=16 uM), MRSA (MIC=32 uM), E.faecalis (MIC=16 uM), E.coli (MIC=8 uM), P.aeruginosa (MIC=16 uM), K.pneumoniae (MIC=8 uM), and C.albicans (MIC=64 uM). Also inhibits biofilm formation. Acts by disrupting cell membranes. Also exhibits anti-proliferative effect against various human cancer cells. Shows weak hemolytic activity towards horse erythrocytes. This Phyllomedusa tarsius (Brownbelly leaf frog) protein is Dermaseptin-PT9.